We begin with the raw amino-acid sequence, 217 residues long: MSEAMMWLLVRGVWETLAMTFVSGFFGFVIGLPVGVLLYVTRPGQIMENARLYRSLSAVVNIFRSIPFIILLVWMIPFTRIIVGTSIGLQAAIVPLTVGAAPFIARIVENALLEIPAGLIEASRAMGATPLQIVRKILLPEALPGLVNAATITLITLVGYSAMGGAVGAGGLGQIGYQYGYIGYNATVMNTVLVLLVVLVYLIQLSGDRIVRAVTHK.

The Periplasmic portion of the chain corresponds to 1-19; that stretch reads MSEAMMWLLVRGVWETLAM. The 192-residue stretch at 13 to 204 folds into the ABC transmembrane type-1 domain; it reads VWETLAMTFV…LLVVLVYLIQ (192 aa). The helical transmembrane segment at 20 to 40 threads the bilayer; the sequence is TFVSGFFGFVIGLPVGVLLYV. Over 41–67 the chain is Cytoplasmic; that stretch reads TRPGQIMENARLYRSLSAVVNIFRSIP. The helical transmembrane segment at 68–88 threads the bilayer; it reads FIILLVWMIPFTRIIVGTSIG. Over 89 to 92 the chain is Periplasmic; the sequence is LQAA. Residues 93-113 form a helical membrane-spanning segment; that stretch reads IVPLTVGAAPFIARIVENALL. Topologically, residues 114 to 151 are cytoplasmic; the sequence is EIPAGLIEASRAMGATPLQIVRKILLPEALPGLVNAAT. Residues 152 to 172 traverse the membrane as a helical segment; that stretch reads ITLITLVGYSAMGGAVGAGGL. Residues 173-185 lie on the Periplasmic side of the membrane; sequence GQIGYQYGYIGYN. A helical membrane pass occupies residues 186–206; that stretch reads ATVMNTVLVLLVVLVYLIQLS. The Cytoplasmic segment spans residues 207–217; the sequence is GDRIVRAVTHK.

This sequence belongs to the binding-protein-dependent transport system permease family. CysTW subfamily.

The protein localises to the cell inner membrane. Functionally, part of the binding-protein-dependent transport system for D-methionine and the toxic methionine analog alpha-methyl-methionine. Probably responsible for the translocation of the substrate across the membrane. This Salmonella typhi protein is D-methionine transport system permease protein MetI (metI).